A 793-amino-acid chain; its full sequence is ClpA homolog protein (793 aa).

Residues Met-1–Ser-24 are disordered. Residues Val-22–Asp-168 enclose the Clp R domain. Repeat regions lie at residues Phe-25 to Asp-88 and Pro-103 to Asp-168. A disordered region spans residues Pro-169–Ala-194. A compositionally biased stretch (basic and acidic residues) spans Glu-185–Ala-194. Residues Leu-199–Arg-447 are i. Residues Gly-244 to Thr-251 and Gly-525 to Thr-532 each bind ATP. An II region spans residues Leu-451–Ala-639.

Belongs to the ClpA/ClpB family.

This chain is ClpA homolog protein, found in Fuscovulum blasticum (Rhodobacter blasticus).